The following is a 222-amino-acid chain: Leucyl/phenylalanyl-tRNA--protein transferase (222 aa).

The protein belongs to the L/F-transferase family.

The protein localises to the cytoplasm. It catalyses the reaction N-terminal L-lysyl-[protein] + L-leucyl-tRNA(Leu) = N-terminal L-leucyl-L-lysyl-[protein] + tRNA(Leu) + H(+). The catalysed reaction is N-terminal L-arginyl-[protein] + L-leucyl-tRNA(Leu) = N-terminal L-leucyl-L-arginyl-[protein] + tRNA(Leu) + H(+). The enzyme catalyses L-phenylalanyl-tRNA(Phe) + an N-terminal L-alpha-aminoacyl-[protein] = an N-terminal L-phenylalanyl-L-alpha-aminoacyl-[protein] + tRNA(Phe). In terms of biological role, functions in the N-end rule pathway of protein degradation where it conjugates Leu, Phe and, less efficiently, Met from aminoacyl-tRNAs to the N-termini of proteins containing an N-terminal arginine or lysine. This chain is Leucyl/phenylalanyl-tRNA--protein transferase, found in Legionella pneumophila (strain Corby).